A 185-amino-acid polypeptide reads, in one-letter code: MAKEWYILHTFSGREARVERAVRMLVEHARIPTNVIFDIKIPEELLTEVKDGKKRVVRRKFFPGYLLVEMDLPEVDWRIVCNEVRRIPGVSGFLGSSGNAKPQAVSADEARRILQKAGEIKGDRTPRIAQTFLVGQQVRIVEGPFATFSGEVEEVMSERNKVRVAVTIFGRATPVELELVQVEAL.

A KOW domain is found at 134 to 163 (VGQQVRIVEGPFATFSGEVEEVMSERNKVR).

Belongs to the NusG family.

Its function is as follows. Participates in transcription elongation, termination and antitermination. The sequence is that of Transcription termination/antitermination protein NusG from Treponema pallidum (strain Nichols).